The chain runs to 184 residues: GTP cyclohydrolase 1 (184 aa).

Cysteine 75, histidine 78, and cysteine 146 together coordinate Zn(2+).

This sequence belongs to the GTP cyclohydrolase I family. Homomer.

The catalysed reaction is GTP + H2O = 7,8-dihydroneopterin 3'-triphosphate + formate + H(+). It participates in cofactor biosynthesis; 7,8-dihydroneopterin triphosphate biosynthesis; 7,8-dihydroneopterin triphosphate from GTP: step 1/1. The polypeptide is GTP cyclohydrolase 1 (Coxiella burnetii (strain Dugway 5J108-111)).